The following is a 130-amino-acid chain: MSAEEISNPLAESGVTISSDSEQYSAPESASPQSPSSSSPAVVLYQPPTVWSLFRSAVINLFLPFVNGMMLGFGELFAHEAAFRLGWSNTKVFPVSRRDARPIGPGVEVVERPRRRVDLDDHLDELTSLE.

The segment at 1 to 41 is disordered; sequence MSAEEISNPLAESGVTISSDSEQYSAPESASPQSPSSSSPA. Over residues 15 to 24 the composition is skewed to polar residues; sequence VTISSDSEQY. The segment covering 25–41 has biased composition (low complexity); sequence SAPESASPQSPSSSSPA.

It belongs to the MIM1 family.

The protein resides in the mitochondrion outer membrane. Required for the assembly of the TOM (translocase of outer membrane) receptor complex, which is responsible for the recognition and translocation of cytosolically synthesized mitochondrial preproteins. This Neurospora crassa (strain ATCC 24698 / 74-OR23-1A / CBS 708.71 / DSM 1257 / FGSC 987) protein is Mitochondrial import protein 1.